A 247-amino-acid polypeptide reads, in one-letter code: MTGALCIVLFGVTMVTAERPKIKDTHGNLLVKLSDIPIGSCGDESYFGLGIMDGGLEECDRWKLEVTNPEYEEYKCKVLRVHASVQNGKCTCNINWKGPICNEYDGCGKGETLFGTSCTPHMCQHNGTIAVGKKEIECICPPPWDGRFCERLACWRKTISTQQHRYRNNGDHCICGNHYSGASCDVIKSCLNNGQLIDGKCKCPDGYYGDLCDKRCQKGHVTCSTCSSFIPAALFAIILLCVNKFNY.

A signal peptide spans methionine 1–alanine 17. Over glutamate 18–histidine 220 the chain is Extracellular. EGF-like domains lie at phenylalanine 114–glutamate 150 and serine 180–aspartate 213. 4 cysteine pairs are disulfide-bonded: cysteine 123-cysteine 138, cysteine 140-cysteine 149, cysteine 190-cysteine 201, and cysteine 203-cysteine 212. Asparagine 126 carries an N-linked (GlcNAc...) asparagine glycan. A helical membrane pass occupies residues valine 221–leucine 240. Residues cysteine 241–tyrosine 247 are Cytoplasmic-facing.

It localises to the membrane. The polypeptide is EGF-like domain-containing protein C02B10.3 (Caenorhabditis elegans).